The sequence spans 70 residues: uncharacterized protein (70 aa).

Residues 21-43 form a C2H2-type zinc finger; sequence YECPICGEIYIKRKSMITHLRKH.

This is an uncharacterized protein from Saccharolobus islandicus (Sulfolobus islandicus).